Reading from the N-terminus, the 240-residue chain is UDP-2,3-diacylglucosamine hydrolase (240 aa).

Mn(2+) is bound by residues D8, H10, D41, N79, and H114. Substrate is bound at residue 79-80 (NR). D122, S160, T164, K167, and H195 together coordinate substrate. The Mn(2+) site is built by H195 and H197.

This sequence belongs to the LpxH family. Mn(2+) is required as a cofactor.

The protein resides in the cell inner membrane. It catalyses the reaction UDP-2-N,3-O-bis[(3R)-3-hydroxytetradecanoyl]-alpha-D-glucosamine + H2O = 2-N,3-O-bis[(3R)-3-hydroxytetradecanoyl]-alpha-D-glucosaminyl 1-phosphate + UMP + 2 H(+). It functions in the pathway glycolipid biosynthesis; lipid IV(A) biosynthesis; lipid IV(A) from (3R)-3-hydroxytetradecanoyl-[acyl-carrier-protein] and UDP-N-acetyl-alpha-D-glucosamine: step 4/6. Its function is as follows. Hydrolyzes the pyrophosphate bond of UDP-2,3-diacylglucosamine to yield 2,3-diacylglucosamine 1-phosphate (lipid X) and UMP by catalyzing the attack of water at the alpha-P atom. Involved in the biosynthesis of lipid A, a phosphorylated glycolipid that anchors the lipopolysaccharide to the outer membrane of the cell. In Pseudomonas aeruginosa (strain UCBPP-PA14), this protein is UDP-2,3-diacylglucosamine hydrolase.